We begin with the raw amino-acid sequence, 188 residues long: Casparian strip membrane protein 1 (188 aa).

Over 1 to 24 the chain is Cytoplasmic; sequence MKAGALELGHASKTTKSGVNRGMS. A helical transmembrane segment spans residues 25–45; sequence ILDLFIRIIAIIATLGSAIAM. Over 46–72 the chain is Extracellular; it reads GTTNETLPFFTQFVRFKAKYSDLPTFT. A glycan (N-linked (GlcNAc...) asparagine) is linked at N49. Residues 73–93 traverse the membrane as a helical segment; the sequence is FFVVANAIVSAYLVLSLGLSI. Residues 94 to 105 are Cytoplasmic-facing; sequence YHIMRSRAQATR. A helical transmembrane segment spans residues 106-126; that stretch reads IALIFFDAAMLGLLTGGASAS. At 127-159 the chain is on the extracellular side; sequence AAIVYLAHKGNRKTNWFPICQQYDSFCHRTSGS. The helical transmembrane segment at 160–180 threads the bilayer; it reads LVGSFAGSVLIILLIFLSAIA. Residues 181–188 are Cytoplasmic-facing; it reads LSRQSLNH.

The protein belongs to the Casparian strip membrane proteins (CASP) family. As to quaternary structure, homodimer and heterodimers.

Its subcellular location is the cell membrane. Functionally, regulates membrane-cell wall junctions and localized cell wall deposition. Required for establishment of the Casparian strip membrane domain (CSD) and the subsequent formation of Casparian strips, a cell wall modification of the root endodermis that determines an apoplastic barrier between the intraorganismal apoplasm and the extraorganismal apoplasm and prevents lateral diffusion. This chain is Casparian strip membrane protein 1, found in Solanum tuberosum (Potato).